Here is a 579-residue protein sequence, read N- to C-terminus: Type II methyltransferase M.BseCI (579 aa).

This sequence belongs to the N(4)/N(6)-methyltransferase family.

It carries out the reaction a 2'-deoxyadenosine in DNA + S-adenosyl-L-methionine = an N(6)-methyl-2'-deoxyadenosine in DNA + S-adenosyl-L-homocysteine + H(+). Functionally, a gamma subtype methylase, recognizes the double-stranded sequence 5'-ATCGAT-3', methylation on A-5 on both strands, and protects the DNA from cleavage by the BanIII endonuclease. In Geobacillus stearothermophilus (Bacillus stearothermophilus), this protein is Type II methyltransferase M.BseCI.